The chain runs to 326 residues: Isopenicillin N synthase (326 aa).

Isopenicillin N is bound by residues R84, Y88, and Y186. R84, Y88, Y186, H209, and D211 together coordinate N-[(5S)-5-amino-5-carboxypentanoyl]-L-cysteinyl-D-valine. The Fe2OG dioxygenase domain occupies 183–283 (LIRYPFLENY…RLSIPFFANL (101 aa)). Positions 209, 211, and 265 each coordinate Fe(2+). R274 contacts 2-oxoglutarate. Residue S276 coordinates isopenicillin N. S276 contributes to the N-[(5S)-5-amino-5-carboxypentanoyl]-L-cysteinyl-D-valine binding site.

The protein belongs to the iron/ascorbate-dependent oxidoreductase family. Fe cation is required as a cofactor. L-ascorbate serves as cofactor.

The catalysed reaction is N-[(5S)-5-amino-5-carboxypentanoyl]-L-cysteinyl-D-valine + O2 = isopenicillin N + 2 H2O. The protein operates within antibiotic biosynthesis; penicillin G biosynthesis; penicillin G from L-alpha-aminoadipate and L-cysteine and L-valine: step 2/3. Functionally, removes, in the presence of oxygen, 4 hydrogen atoms from delta-L-(alpha-aminoadipyl)-L-cysteinyl-D-valine (ACV) to form the azetidinone and thiazolidine rings of isopenicillin. This Lysobacter lactamgenus protein is Isopenicillin N synthase (pcbC).